Here is a 280-residue protein sequence, read N- to C-terminus: Fructose-1,6-bisphosphatase class 1 (280 aa).

Mg(2+) contacts are provided by Glu-64, Asp-83, Leu-85, and Asp-86. Substrate is bound by residues 86–89 (DGSS), Tyr-189, and Lys-220. Mg(2+) is bound at residue Glu-226.

This sequence belongs to the FBPase class 1 family. In terms of assembly, homotetramer. The cofactor is Mg(2+).

It localises to the cytoplasm. It catalyses the reaction beta-D-fructose 1,6-bisphosphate + H2O = beta-D-fructose 6-phosphate + phosphate. It functions in the pathway carbohydrate biosynthesis; gluconeogenesis. The polypeptide is Fructose-1,6-bisphosphatase class 1 (Campylobacter jejuni (strain RM1221)).